A 289-amino-acid chain; its full sequence is Enoyl-CoA hydratase domain-containing protein 3, mitochondrial (289 aa).

Residues 1-14 constitute a mitochondrion transit peptide; that stretch reads MLLRGFSELLKCRG.

The protein belongs to the enoyl-CoA hydratase/isomerase family.

It is found in the mitochondrion. Functionally, may play a role in fatty acid biosynthesis and insulin sensitivity. The polypeptide is Enoyl-CoA hydratase domain-containing protein 3, mitochondrial (echdc3) (Danio rerio (Zebrafish)).